Here is a 713-residue protein sequence, read N- to C-terminus: TWiK family of potassium channels protein 12 (713 aa).

The Cytoplasmic segment spans residues 1–15; sequence MTLFKKIQWFCNLIR. The helical transmembrane segment at 16–36 threads the bilayer; the sequence is LRSYYKFLLLIAYTAFGAWLF. N-linked (GlcNAc...) asparagine glycans are attached at residues asparagine 53, asparagine 77, and asparagine 98. The segment at residues 112 to 132 is an intramembrane region (pore-forming); that stretch reads WTWTGAMFYAGQLYTTIGYGY. Residues 142 to 162 form a helical membrane-spanning segment; that stretch reads ICTIFYALFGIPCFLMYLKIE. Over 163 to 242 the chain is Cytoplasmic; it reads NAIEWKKDKQ…AEERKKKPFP (80 aa). A helical membrane pass occupies residues 243-263; that stretch reads IPIAIIMLIIWICFSASMFCI. The pore-forming intramembrane region spans 267 to 287; it reads TWVFSSAVYFFIVSISTVGLG. The chain crosses the membrane as a helical span at residues 298–318; it reads VFNFLLILVGLALLSMCFELI. The Cytoplasmic portion of the chain corresponds to 319–713; that stretch reads TDRVAKWKQK…LSKRDASTMA (395 aa).

The protein belongs to the two pore domain potassium channel (TC 1.A.1.8) family.

Its subcellular location is the membrane. In Caenorhabditis elegans, this protein is TWiK family of potassium channels protein 12 (twk-12).